The sequence spans 237 residues: Large ribosomal subunit protein uL1 (237 aa).

This sequence belongs to the universal ribosomal protein uL1 family. In terms of assembly, part of the 50S ribosomal subunit.

In terms of biological role, binds directly to 23S rRNA. The L1 stalk is quite mobile in the ribosome, and is involved in E site tRNA release. Protein L1 is also a translational repressor protein, it controls the translation of the L11 operon by binding to its mRNA. The protein is Large ribosomal subunit protein uL1 of Corynebacterium kroppenstedtii (strain DSM 44385 / JCM 11950 / CIP 105744 / CCUG 35717).